The following is a 327-amino-acid chain: MQQLEEVVGQAKAEIEGVNDVATLDEIRVKYLGKKGFFTEQMKTLGALSAEERPAAGAVINQAKQQVQDALNARRDALVEQELNQKLAAETIDVSLPGRRIENGGLHPVTRTIERIERLFGEMGFKVERGPEIEDGFHNFDALNIPAHHPARTDHDTFYFNPDLMLRTHTSGVQIRTMEHQQPPIRIIAPGRVYRNDYDMTHTPMFHQVEGLLVDEHASFTELKGILHDFLRNYFEEDLTIRFRPSYFPFTEPSAEVDVMGKNGKWLEVLGCGMVHPNVLRSVGIDPEKYSGFAFGMGVERLTMLRYGVNDLRAFFENDLRFLKQFK.

Mg(2+) is bound at residue Glu252.

It belongs to the class-II aminoacyl-tRNA synthetase family. Phe-tRNA synthetase alpha subunit type 1 subfamily. Tetramer of two alpha and two beta subunits. It depends on Mg(2+) as a cofactor.

The protein localises to the cytoplasm. It carries out the reaction tRNA(Phe) + L-phenylalanine + ATP = L-phenylalanyl-tRNA(Phe) + AMP + diphosphate + H(+). The polypeptide is Phenylalanine--tRNA ligase alpha subunit (Aeromonas salmonicida (strain A449)).